The sequence spans 508 residues: ATP synthase subunit alpha, chloroplastic (508 aa).

Residue 173 to 180 (GDRQTGKT) participates in ATP binding.

It belongs to the ATPase alpha/beta chains family. F-type ATPases have 2 components, CF(1) - the catalytic core - and CF(0) - the membrane proton channel. CF(1) has five subunits: alpha(3), beta(3), gamma(1), delta(1), epsilon(1). CF(0) has four main subunits: a, b, b' and c.

Its subcellular location is the plastid. The protein resides in the chloroplast thylakoid membrane. The catalysed reaction is ATP + H2O + 4 H(+)(in) = ADP + phosphate + 5 H(+)(out). Its function is as follows. Produces ATP from ADP in the presence of a proton gradient across the membrane. The alpha chain is a regulatory subunit. This is ATP synthase subunit alpha, chloroplastic from Chara vulgaris (Common stonewort).